A 465-amino-acid polypeptide reads, in one-letter code: MTGRAMDPLPAAAVGAAAEAEADEEADPPASDLPTPQAIEPQAIVQQVPAPSRMQMPQGNPLLLSHTLQELLARDTVQVELIPEKKGLFLKHVEYEVSSQRFKSSVYRRYNDFVVFQEMLLHKFPYRMVPALPPKRMLGADREFIEARRRALKRFVNLVARHPLFSEDVVLKLFLSFSGSDVQNKLKESAQCVGDEFLNCKLATRAKDFLPADIQAQFAISRELIRNIYNSFHKLRDRAERIASRAIDNAADLLIFGKELSAIGSDTTPLPSWAALNSSTWGSLKQALKGLSVEFALLADKAAQQGKQEENDVVEKLNLFLDLLQSYKDLCERHEKGVLHKHQRALHKYSLMKRQMMSATAQNREPESVEQLESRIVEQENAIQTMELRNYFSLYCLHQETQLIHVYLPLTSHILRAFVNSQIQGHKEMSKVWNDLRPKLSCLFAGPHSTLTPPCSPPEDGLCPH.

Residues 1-19 are compositionally biased toward low complexity; sequence MTGRAMDPLPAAAVGAAAE. Positions 1–36 are disordered; sequence MTGRAMDPLPAAAVGAAAEAEADEEADPPASDLPTP. In terms of domain architecture, PX spans 73 to 181; sequence ARDTVQVELI…KLFLSFSGSD (109 aa). A 1,2-diacyl-sn-glycero-3-phospho-(1D-myo-inositol-3-phosphate) contacts are provided by Arg109, Lys135, and Arg148. At Thr452 the chain carries Phosphothreonine. Ser456 carries the post-translational modification Phosphoserine.

This sequence belongs to the sorting nexin family.

The protein resides in the early endosome membrane. In terms of biological role, may be involved in several stages of intracellular trafficking. May play a role in intracellular protein transport from early endosomes to the trans-Golgi network. The protein is Sorting nexin-8 (SNX8) of Homo sapiens (Human).